A 377-amino-acid polypeptide reads, in one-letter code: 5-hydroxytryptamine receptor 1D (377 aa).

Asn-5, Asn-17, and Asn-21 each carry an N-linked (GlcNAc...) asparagine glycan. Helical transmembrane passes span 39–64 (ISLA…TTIF), 76–97 (LIGS…ISIA), and 110–134 (LCDI…VIAL). An intrachain disulfide couples Cys-111 to Cys-188. Serotonin contacts are provided by Asp-118 and Cys-122. A DRY motif; important for ligand-induced conformation changes motif is present at residues 135–137 (DRY). Transmembrane regions (helical) follow at residues 155-176 (AAVM…PLFW), 195-218 (ISYT…ILYG), 301-326 (KTLG…VLPI), and 336-359 (ALFD…YTVF). Residue Ser-321 coordinates serotonin. The NPxxY motif; important for ligand-induced conformation changes and signaling signature appears at 352 to 356 (NPIIY).

It belongs to the G-protein coupled receptor 1 family. As to quaternary structure, homodimer. Heterodimer with HTR1B.

Its subcellular location is the cell membrane. Its function is as follows. G-protein coupled receptor for 5-hydroxytryptamine (serotonin). Also functions as a receptor for ergot alkaloid derivatives, various anxiolytic and antidepressant drugs and other psychoactive substances. Ligand binding causes a conformation change that triggers signaling via guanine nucleotide-binding proteins (G proteins) and modulates the activity of downstream effectors, such as adenylate cyclase. HTR1D is coupled to G(i)/G(o) G alpha proteins and mediates inhibitory neurotransmission by inhibiting adenylate cyclase activity. Regulates the release of 5-hydroxytryptamine in the brain, and thereby affects neural activity. May also play a role in regulating the release of other neurotransmitters. May play a role in vasoconstriction. The polypeptide is 5-hydroxytryptamine receptor 1D (HTR1D) (Canis lupus familiaris (Dog)).